Consider the following 35-residue polypeptide: uncharacterized protein (35 aa).

This is an uncharacterized protein from Escherichia coli (Bacteriophage T3).